The primary structure comprises 133 residues: Osteocrin (133 aa).

The signal sequence occupies residues 1–27 (MLDWRLASAHFILAVTLTLWSSGKVLS). Arginine 132 is subject to Arginine amide.

This sequence belongs to the Osteocrin family. As to quaternary structure, interacts with NPR3. Enriched in neocortical regions of the developing cerebral cortex. Not expressed in other compartments of the neocortical wall or in brain regions such as the hippocampus, striatum, mediodorsal nucleus of the thalamus and cerebellum. Also expressed in bone. In developing neonatal rib bone, present at high level in osteoblasts on bone-forming surfaces, in newly incorporated osteocytes and in some late hypertrophic chondrocytes (at protein level). In adult bone, localizes specifically to osteoblasts and young osteocytes at bone-forming sites (at protein level).

The protein localises to the secreted. Functionally, hormone that acts as a regulator of dendritic growth in the developing cerebral cortex in response to sensory experience. Induced in the brain following membrane depolarization and inhibits dendritic branching in neurons of the developing cortex. Probably acts by binding to natriuretic peptide receptor NPR3/NPR-C, thereby preventing binding between NPR3/NPR-C and natriuretic peptides, leading to increase cGMP production. In Homo sapiens (Human), this protein is Osteocrin.